The following is a 123-amino-acid chain: WAP four-disulfide core domain protein 5 (123 aa).

The first 24 residues, 1-24 (MRIQSLLLLGVLLAVGSQLPAAFG), serve as a signal peptide directing secretion. WAP domains lie at 27–73 (KGEK…CVPR) and 74–121 (ISVK…RDPA). Disulfide bonds link cysteine 34/cysteine 62, cysteine 41/cysteine 66, cysteine 49/cysteine 61, cysteine 55/cysteine 70, cysteine 81/cysteine 109, cysteine 88/cysteine 113, cysteine 96/cysteine 108, and cysteine 102/cysteine 117.

It is found in the secreted. Functionally, putative acid-stable proteinase inhibitor. This Callithrix jacchus (White-tufted-ear marmoset) protein is WAP four-disulfide core domain protein 5 (WFDC5).